The sequence spans 368 residues: D-alanine--D-alanine ligase (368 aa).

In terms of domain architecture, ATP-grasp spans 151–358 (KKLLAAEGLP…YGTLVSTLVD (208 aa)). ATP is bound at residue 179 to 234 (KSRLHLPVFVKPARGGSSIGITRVAEWAALDDAIAHARLHDPKVIVESGIIGREVE). Positions 313, 325, and 327 each coordinate Mg(2+).

It belongs to the D-alanine--D-alanine ligase family. Mg(2+) is required as a cofactor. It depends on Mn(2+) as a cofactor.

The protein localises to the cytoplasm. It catalyses the reaction 2 D-alanine + ATP = D-alanyl-D-alanine + ADP + phosphate + H(+). Its pathway is cell wall biogenesis; peptidoglycan biosynthesis. In terms of biological role, cell wall formation. The sequence is that of D-alanine--D-alanine ligase from Rhodococcus jostii (strain RHA1).